Reading from the N-terminus, the 186-residue chain is Intraflagellar transport protein 27 homolog (186 aa).

GTP is bound by residues G12 to T19, D64 to K68, and N123 to D126.

The protein belongs to the small GTPase superfamily. Rab family. As to quaternary structure, component of the IFT complex B, at least composed of IFT20, IFT25, IFT27, IFT52, IFT57, IFT74, IFT81, IFT88 and TRAF3IP1. Interacts with IFT25. Interacts with IFT70B. Interacts with RABL2/RABL2A; binding is equal in the presence of GTP or GDP. Interacts with ARL6; recognizes and binds with the GTP-free form of ARL6.

Its subcellular location is the cell projection. The protein resides in the cilium. It localises to the cytoplasm. The protein localises to the flagellum. Its function is as follows. Small GTPase-like component of the intraflagellar transport (IFT) complex B that promotes the exit of the BBSome complex from cilia via its interaction with ARL6. Not involved in entry of the BBSome complex into cilium. Prevents aggregation of GTP-free ARL6. Required for hedgehog signaling. Forms a subcomplex within the IFT complex B with IFT25. Its role in intraflagellar transport is mainly seen in tissues rich in ciliated cells such as kidney and testis. Essential for male fertility, spermiogenesis and sperm flagella formation. Plays a role in the early development of the kidney. May be involved in the regulation of ureteric bud initiation. The polypeptide is Intraflagellar transport protein 27 homolog (IFT27) (Homo sapiens (Human)).